The chain runs to 78 residues: NAD(P)H-quinone oxidoreductase subunit L (78 aa).

The next 2 helical transmembrane spans lie at leucine 10 to glycine 30 and leucine 48 to leucine 68.

The protein belongs to the complex I NdhL subunit family. NDH-1 can be composed of about 15 different subunits; different subcomplexes with different compositions have been identified which probably have different functions.

It localises to the cellular thylakoid membrane. The catalysed reaction is a plastoquinone + NADH + (n+1) H(+)(in) = a plastoquinol + NAD(+) + n H(+)(out). The enzyme catalyses a plastoquinone + NADPH + (n+1) H(+)(in) = a plastoquinol + NADP(+) + n H(+)(out). Its function is as follows. NDH-1 shuttles electrons from an unknown electron donor, via FMN and iron-sulfur (Fe-S) centers, to quinones in the respiratory and/or the photosynthetic chain. The immediate electron acceptor for the enzyme in this species is believed to be plastoquinone. Couples the redox reaction to proton translocation, and thus conserves the redox energy in a proton gradient. Cyanobacterial NDH-1 also plays a role in inorganic carbon-concentration. This is NAD(P)H-quinone oxidoreductase subunit L from Prochlorococcus marinus (strain SARG / CCMP1375 / SS120).